Reading from the N-terminus, the 154-residue chain is Aspartate carbamoyltransferase regulatory chain (154 aa).

Zn(2+) contacts are provided by cysteine 109, cysteine 114, cysteine 138, and cysteine 141.

Belongs to the PyrI family. As to quaternary structure, contains catalytic and regulatory chains. Zn(2+) is required as a cofactor.

In terms of biological role, involved in allosteric regulation of aspartate carbamoyltransferase. The polypeptide is Aspartate carbamoyltransferase regulatory chain (Yersinia pseudotuberculosis serotype O:1b (strain IP 31758)).